The chain runs to 461 residues: Bifunctional protein GlmU (461 aa).

The segment at 1–235 (MTDTRKQRAA…EDDLIGCDSK (235 aa)) is pyrophosphorylase. Residues 13–16 (LAAG), Lys-27, Gln-80, 85–86 (GT), 108–110 (YGD), Gly-146, Glu-161, and Asn-176 contribute to the UDP-N-acetyl-alpha-D-glucosamine site. Mg(2+) is bound at residue Asp-110. The interval 236 to 256 (ADLAEAEAIFQQKRRRALMEA) is linker. The segment at 257–461 (GVTMVAPETV…ARTTDQNKKG (205 aa)) is N-acetyltransferase. Residues Arg-322 and Lys-340 each contribute to the UDP-N-acetyl-alpha-D-glucosamine site. Residue His-352 is the Proton acceptor of the active site. UDP-N-acetyl-alpha-D-glucosamine is bound by residues Tyr-355 and Asn-366. Acetyl-CoA contacts are provided by residues Ala-369, 375–376 (NY), Ser-394, Ser-412, and Arg-429.

The protein in the N-terminal section; belongs to the N-acetylglucosamine-1-phosphate uridyltransferase family. It in the C-terminal section; belongs to the transferase hexapeptide repeat family. In terms of assembly, homotrimer. Requires Mg(2+) as cofactor.

The protein localises to the cytoplasm. The enzyme catalyses alpha-D-glucosamine 1-phosphate + acetyl-CoA = N-acetyl-alpha-D-glucosamine 1-phosphate + CoA + H(+). It catalyses the reaction N-acetyl-alpha-D-glucosamine 1-phosphate + UTP + H(+) = UDP-N-acetyl-alpha-D-glucosamine + diphosphate. Its pathway is nucleotide-sugar biosynthesis; UDP-N-acetyl-alpha-D-glucosamine biosynthesis; N-acetyl-alpha-D-glucosamine 1-phosphate from alpha-D-glucosamine 6-phosphate (route II): step 2/2. It functions in the pathway nucleotide-sugar biosynthesis; UDP-N-acetyl-alpha-D-glucosamine biosynthesis; UDP-N-acetyl-alpha-D-glucosamine from N-acetyl-alpha-D-glucosamine 1-phosphate: step 1/1. It participates in bacterial outer membrane biogenesis; LPS lipid A biosynthesis. Catalyzes the last two sequential reactions in the de novo biosynthetic pathway for UDP-N-acetylglucosamine (UDP-GlcNAc). The C-terminal domain catalyzes the transfer of acetyl group from acetyl coenzyme A to glucosamine-1-phosphate (GlcN-1-P) to produce N-acetylglucosamine-1-phosphate (GlcNAc-1-P), which is converted into UDP-GlcNAc by the transfer of uridine 5-monophosphate (from uridine 5-triphosphate), a reaction catalyzed by the N-terminal domain. This chain is Bifunctional protein GlmU, found in Hyphomonas neptunium (strain ATCC 15444).